The chain runs to 353 residues: MIMKVVVKVGSNLLVGSSGLRKSYIAELCREVARLKSQGHEISIITSGARAAGFTYLGKGKRTQDLHIKQALCAVGQVQLMKVYENAFDFYGIKIAQILLTRDTFSNRKRYLNLRNTLIGLSEFDVVPIVNENDTVATEEITLGDNDTLAAMFSIAWDADFLVLFTTVDGVIDENGKLVERFDESVKLKDMGKSSWGTGGIRSKIESALMASRCGVKATICSGNDVSNLTRFVKGEPVGTVFEPQGRLKAKKAWIAFLSEPAGKIYVNKGAEEALKSGNSLLPVGVTGVEGTFDVGDVVEIVNEEGELVGRGIVNYSSSDLEKIAGHKSSDLKKILGYEGNKVVVHIDNMWVA.

Lysine 8 provides a ligand contact to ATP. Serine 47, aspartate 134, and asparagine 146 together coordinate substrate. 198-204 (TGGIRSK) is a binding site for ATP. Positions 262–339 (AGKIYVNKGA…SDLKKILGYE (78 aa)) constitute a PUA domain.

The protein belongs to the glutamate 5-kinase family.

Its subcellular location is the cytoplasm. The enzyme catalyses L-glutamate + ATP = L-glutamyl 5-phosphate + ADP. It functions in the pathway amino-acid biosynthesis; L-proline biosynthesis; L-glutamate 5-semialdehyde from L-glutamate: step 1/2. In terms of biological role, catalyzes the transfer of a phosphate group to glutamate to form L-glutamate 5-phosphate. This chain is Glutamate 5-kinase, found in Thermotoga maritima (strain ATCC 43589 / DSM 3109 / JCM 10099 / NBRC 100826 / MSB8).